A 476-amino-acid polypeptide reads, in one-letter code: ATP synthase subunit beta (476 aa).

157-164 contributes to the ATP binding site; that stretch reads GGAGVGKT.

Belongs to the ATPase alpha/beta chains family. As to quaternary structure, F-type ATPases have 2 components, CF(1) - the catalytic core - and CF(0) - the membrane proton channel. CF(1) has five subunits: alpha(3), beta(3), gamma(1), delta(1), epsilon(1). CF(0) has three main subunits: a(1), b(2) and c(9-12). The alpha and beta chains form an alternating ring which encloses part of the gamma chain. CF(1) is attached to CF(0) by a central stalk formed by the gamma and epsilon chains, while a peripheral stalk is formed by the delta and b chains.

It is found in the cell membrane. The catalysed reaction is ATP + H2O + 4 H(+)(in) = ADP + phosphate + 5 H(+)(out). Produces ATP from ADP in the presence of a proton gradient across the membrane. The catalytic sites are hosted primarily by the beta subunits. The sequence is that of ATP synthase subunit beta from Mycoplasma genitalium (strain ATCC 33530 / DSM 19775 / NCTC 10195 / G37) (Mycoplasmoides genitalium).